The chain runs to 65 residues: Large ribosomal subunit protein uL30 (65 aa).

It belongs to the universal ribosomal protein uL30 family. In terms of assembly, part of the 50S ribosomal subunit.

This Aster yellows witches'-broom phytoplasma (strain AYWB) protein is Large ribosomal subunit protein uL30.